A 1394-amino-acid polypeptide reads, in one-letter code: Kinesin-like protein KIF27 (1394 aa).

One can recognise a Kinesin motor domain in the interval Pro-5–Ile-341. Gly-84–Thr-91 is an ATP binding site. 2 coiled-coil regions span residues Gln-352–Ala-418 and Gln-493–Lys-554. 2 disordered regions span residues Glu-551–Ala-583 and Phe-642–His-664. Residues Arg-555–Glu-565 show a composition bias toward polar residues. A compositionally biased stretch (basic and acidic residues) spans Pro-571–Pro-580. A phosphoserine mark is found at Ser-643, Ser-646, Ser-672, Ser-675, and Ser-704. The stretch at Leu-709 to Leu-980 forms a coiled coil. Ser-999 bears the Phosphoserine mark. 3 coiled-coil regions span residues Thr-1010–Asn-1078, Asn-1118–Glu-1152, and Gln-1187–Asp-1226. Positions Thr-1267 to Asp-1280 are enriched in basic and acidic residues. The tract at residues Thr-1267–Gln-1340 is disordered. 2 stretches are compositionally biased toward polar residues: residues Asn-1281–Ile-1295 and Ala-1310–Ala-1320. Ser-1365 and Ser-1387 each carry phosphoserine. Residues Ser-1375–Ser-1394 form a disordered region.

Belongs to the TRAFAC class myosin-kinesin ATPase superfamily. Kinesin family. KIF27 subfamily. In terms of assembly, interacts with STK36.

It is found in the cytoplasm. The protein localises to the cytoskeleton. It localises to the cell projection. The protein resides in the cilium. Plays an essential role in motile ciliogenesis. In Rattus norvegicus (Rat), this protein is Kinesin-like protein KIF27 (Kif27).